The primary structure comprises 76 residues: MKAGIHPAYNEISVICACGHSLKTRSTHKGDMRVEICSSCHPFFTGKQKLMDTAGRIDRFEKKYKASRVGKAAPTT.

Residues Cys-16, Cys-18, Cys-37, and Cys-40 each contribute to the Zn(2+) site.

It belongs to the bacterial ribosomal protein bL31 family. Type A subfamily. Part of the 50S ribosomal subunit. The cofactor is Zn(2+).

Functionally, binds the 23S rRNA. This is Large ribosomal subunit protein bL31 from Solibacter usitatus (strain Ellin6076).